Reading from the N-terminus, the 830-residue chain is Penicillin-binding protein 1A (830 aa).

The Cytoplasmic portion of the chain corresponds to 1–18 (MGKKKKKRKSSAFKIILN). A helical; Signal-anchor for type II membrane protein transmembrane segment spans residues 19–39 (VFLSIFLVAGVAFGGIVFAMI). Residues 40–830 (KTAPPLNVQQ…QNHEDNKNKQ (791 aa)) lie on the Extracellular side of the membrane. The tract at residues 57-229 (SILYDDKGQY…PSVYYPYSSA (173 aa)) is transglycosylase. Glu96 serves as the catalytic Proton donor; for transglycosylase activity. The tract at residues 357 to 641 (ASAVIMDYHN…AARLWGDIMK (285 aa)) is transpeptidase. The active-site Acyl-ester intermediate; for transpeptidase activity is Ser398. Residues 754 to 830 (GGSLPPTEEK…QNHEDNKNKQ (77 aa)) form a disordered region. Over residues 760–786 (TEEKNNSNTRDKNKDKNKNKNKDKNPS) the composition is skewed to basic and acidic residues. Over residues 787–820 (QDKPNNNNNDNNSNNNNNNNDNNNNTKPPENDSN) the composition is skewed to low complexity. Positions 821-830 (QNHEDNKNKQ) are enriched in basic and acidic residues.

In the N-terminal section; belongs to the glycosyltransferase 51 family. It in the C-terminal section; belongs to the transpeptidase family.

The protein localises to the cell membrane. The enzyme catalyses [GlcNAc-(1-&gt;4)-Mur2Ac(oyl-L-Ala-gamma-D-Glu-L-Lys-D-Ala-D-Ala)](n)-di-trans,octa-cis-undecaprenyl diphosphate + beta-D-GlcNAc-(1-&gt;4)-Mur2Ac(oyl-L-Ala-gamma-D-Glu-L-Lys-D-Ala-D-Ala)-di-trans,octa-cis-undecaprenyl diphosphate = [GlcNAc-(1-&gt;4)-Mur2Ac(oyl-L-Ala-gamma-D-Glu-L-Lys-D-Ala-D-Ala)](n+1)-di-trans,octa-cis-undecaprenyl diphosphate + di-trans,octa-cis-undecaprenyl diphosphate + H(+). The catalysed reaction is Preferential cleavage: (Ac)2-L-Lys-D-Ala-|-D-Ala. Also transpeptidation of peptidyl-alanyl moieties that are N-acyl substituents of D-alanine.. It participates in cell wall biogenesis; peptidoglycan biosynthesis. Functionally, cell wall formation. Synthesis of cross-linked peptidoglycan from the lipid intermediates. The enzyme has a penicillin-insensitive transglycosylase N-terminal domain (formation of linear glycan strands) and a penicillin-sensitive transpeptidase C-terminal domain (cross-linking of the peptide subunits). The polypeptide is Penicillin-binding protein 1A (pbpA) (Clostridium botulinum (strain Hall / ATCC 3502 / NCTC 13319 / Type A)).